We begin with the raw amino-acid sequence, 333 residues long: Calcium uniporter protein, mitochondrial (333 aa).

Residues 1-22 (MRNGRCLVTPFVTAQRLANLRN) constitute a mitochondrion transit peptide. At 23–214 (TLWNRQQIAF…QECEAHTDRV (192 aa)) the chain is on the mitochondrial matrix side. The stretch at 180 to 193 (KKLLLQLENAETLL) forms a coiled coil. Residues 195-213 (PLHDAKRKIEQECEAHTDR) form an outer juxtamembrane helix (OJMH) region. Residues 215 to 234 (MWAGFAAMGVQTGLFARLTW) traverse the membrane as a helical segment. Residues 235–243 (WEYSWDIME) are Mitochondrial intermembrane-facing. The short motif at 239–247 (WDIMEPVTY) is the Selectivity filter element. A Ca(2+)-binding site is contributed by Glu-243. The chain crosses the membrane as a helical span at residues 244-260 (PVTYFATYSTVCATFGY). Over 261–333 (YLYTQQSFEY…SYLSNLEAEK (73 aa)) the chain is Mitochondrial matrix. Residues 262 to 271 (LYTQQSFEYP) form an inner juxtamembrane helix (IJMH) region. Residues 289–316 (QNFDIEKYNRLVTEVDELRNQLKRMRDP) are a coiled coil.

The protein belongs to the MCU (TC 1.A.77) family.

The protein localises to the mitochondrion inner membrane. The enzyme catalyses Ca(2+)(in) = Ca(2+)(out). Its activity is regulated as follows. Inhibited by ruthenium red or its derivative Ru360; possibly by obstructing the pore. Functionally, mitochondrial inner membrane calcium uniporter that mediates calcium uptake into mitochondria. Constitutes a pore-forming and calcium-conducting subunit. Mitochondrial calcium homeostasis plays key roles in cellular physiology and regulates cell bioenergetics, cytoplasmic calcium signals and activation of cell death pathways. Required for rapid mitochondrial calcium uptake and mitochondrial reactive oxygen species (mtROS) production after wounding. In addition, together with mitochondrial calcium regulator micu-1, required for mitochondrial calcium uptake following axon injury in PLM touch receptor neurons. The polypeptide is Calcium uniporter protein, mitochondrial (Caenorhabditis elegans).